Here is a 96-residue protein sequence, read N- to C-terminus: Small ribosomal subunit protein bS6 (96 aa).

This sequence belongs to the bacterial ribosomal protein bS6 family.

In terms of biological role, binds together with bS18 to 16S ribosomal RNA. This Streptococcus pyogenes serotype M1 protein is Small ribosomal subunit protein bS6.